We begin with the raw amino-acid sequence, 512 residues long: Proline--tRNA ligase (512 aa).

Acidic residues predominate over residues 460 to 470 (SDEDDEQDTTD). The interval 460 to 484 (SDEDDEQDTTDENMGVNNDTTVESN) is disordered.

This sequence belongs to the class-II aminoacyl-tRNA synthetase family. ProS type 3 subfamily. Homodimer.

The protein localises to the cytoplasm. It catalyses the reaction tRNA(Pro) + L-proline + ATP = L-prolyl-tRNA(Pro) + AMP + diphosphate. Catalyzes the attachment of proline to tRNA(Pro) in a two-step reaction: proline is first activated by ATP to form Pro-AMP and then transferred to the acceptor end of tRNA(Pro). The chain is Proline--tRNA ligase from Haloquadratum walsbyi (strain DSM 16790 / HBSQ001).